The sequence spans 350 residues: tRNA uridine(34) hydroxylase (350 aa).

The 95-residue stretch at D146 to L240 folds into the Rhodanese domain. Catalysis depends on C200, which acts as the Cysteine persulfide intermediate.

It belongs to the TrhO family.

The catalysed reaction is uridine(34) in tRNA + AH2 + O2 = 5-hydroxyuridine(34) in tRNA + A + H2O. Its function is as follows. Catalyzes oxygen-dependent 5-hydroxyuridine (ho5U) modification at position 34 in tRNAs. This Escherichia fergusonii (strain ATCC 35469 / DSM 13698 / CCUG 18766 / IAM 14443 / JCM 21226 / LMG 7866 / NBRC 102419 / NCTC 12128 / CDC 0568-73) protein is tRNA uridine(34) hydroxylase.